The sequence spans 489 residues: Glycogen synthase (489 aa).

Arg20 provides a ligand contact to ADP-alpha-D-glucose.

The protein belongs to the glycosyltransferase 1 family. Bacterial/plant glycogen synthase subfamily.

It carries out the reaction [(1-&gt;4)-alpha-D-glucosyl](n) + ADP-alpha-D-glucose = [(1-&gt;4)-alpha-D-glucosyl](n+1) + ADP + H(+). The protein operates within glycan biosynthesis; glycogen biosynthesis. Its function is as follows. Synthesizes alpha-1,4-glucan chains using ADP-glucose. The polypeptide is Glycogen synthase (Pelodictyon phaeoclathratiforme (strain DSM 5477 / BU-1)).